Consider the following 117-residue polypeptide: DNA-directed RNA polymerase subunit omega (117 aa).

The protein belongs to the RNA polymerase subunit omega family. The RNAP catalytic core consists of 2 alpha, 1 beta, 1 beta' and 1 omega subunit. When a sigma factor is associated with the core the holoenzyme is formed, which can initiate transcription.

The catalysed reaction is RNA(n) + a ribonucleoside 5'-triphosphate = RNA(n+1) + diphosphate. Functionally, promotes RNA polymerase assembly. Latches the N- and C-terminal regions of the beta' subunit thereby facilitating its interaction with the beta and alpha subunits. In Ruegeria sp. (strain TM1040) (Silicibacter sp.), this protein is DNA-directed RNA polymerase subunit omega.